A 487-amino-acid chain; its full sequence is GTPase Der (487 aa).

2 EngA-type G domains span residues 3–166 (PVVA…AEAM) and 199–372 (IKLA…DSAT). Residues 9–16 (GRPNVGKS), 56–60 (DTGGI), 118–121 (NKID), 205–212 (GKPNVGKS), 252–256 (DTAGV), and 317–320 (NKWD) contribute to the GTP site. The region spanning 373-457 (RRVSTSMLTR…PIQLRFQEGD (85 aa)) is the KH-like domain.

The protein belongs to the TRAFAC class TrmE-Era-EngA-EngB-Septin-like GTPase superfamily. EngA (Der) GTPase family. Associates with the 50S ribosomal subunit.

Functionally, GTPase that plays an essential role in the late steps of ribosome biogenesis. This chain is GTPase Der, found in Shewanella oneidensis (strain ATCC 700550 / JCM 31522 / CIP 106686 / LMG 19005 / NCIMB 14063 / MR-1).